We begin with the raw amino-acid sequence, 465 residues long: GTPase Der (465 aa).

2 EngA-type G domains span residues 3–166 (FLVA…LNEY) and 184–358 (IHFS…ACAN). Residues 9-16 (GRANVGKS), 56-60 (DTGGI), 118-121 (NKVD), 190-197 (GRPNVGKS), 237-241 (DTAGV), and 302-305 (NKWD) each bind GTP. The KH-like domain occupies 359-443 (KKITTADATR…PIVFEFKQSE (85 aa)). Residues 446–465 (FADRKNKRSKDEGSKSKKVK) form a disordered region.

It belongs to the TRAFAC class TrmE-Era-EngA-EngB-Septin-like GTPase superfamily. EngA (Der) GTPase family. Associates with the 50S ribosomal subunit.

GTPase that plays an essential role in the late steps of ribosome biogenesis. The protein is GTPase Der of Francisella tularensis subsp. novicida (strain U112).